The chain runs to 578 residues: Palmitoyltransferase ZDHHC1 (578 aa).

Residues 1-41 lie on the Cytoplasmic side of the membrane; it reads MDVCSKNSNRTAPVSEGGIRRADVPLCSRTNGWSWPPHPFQ. A helical transmembrane segment spans residues 42 to 62; that stretch reads FLAWLLYLYFAVTGFGVFVPL. The Lumenal portion of the chain corresponds to 63–71; the sequence is LPTHWIPAG. Residues 72-92 form a helical membrane-spanning segment; it reads YICTGITFVCHLFMHLMAVSI. Topologically, residues 93–174 are cytoplasmic; sequence DPADYNVRAK…YWLFLNSVIS (82 aa). A DHHC domain is found at 121–173; the sequence is ENCHCYLCEVDVGPKSKHCSACNKCVASFDHHCRWLNNCVGSRNYWLFLNSVI. Residue cysteine 153 is the S-palmitoyl cysteine intermediate of the active site. The chain crosses the membrane as a helical span at residues 175–195; that stretch reads ALLGIVLVVVIASYVFIEFFL. Topologically, residues 196–230 are lumenal; sequence DPSKLRSDKHFQQVRNESVVWFVFLPVAPVTTAGP. Residues 231 to 251 traverse the membrane as a helical segment; sequence AIPALAGVTIALGLLSALLLG. Over 252 to 578 the chain is Cytoplasmic; that stretch reads HLLCFHIYLM…PSSRVGTSLA (327 aa). Over residues 278-288 the composition is skewed to basic and acidic residues; it reads QEAGDSRKPPP. Disordered regions lie at residues 278-298, 345-376, 497-517, and 532-578; these read QEAG…PKLN, HMDE…KRKV, SAAG…TAAR, and SMFM…TSLA. Residues 363 to 376 show a composition bias toward basic residues; it reads PHPHKHAQKKKRKV. Residues 552–561 are compositionally biased toward basic residues; the sequence is AAKRKQTGKK.

This sequence belongs to the DHHC palmitoyltransferase family.

It localises to the endosome membrane. Its subcellular location is the endoplasmic reticulum membrane. The protein localises to the golgi apparatus. It carries out the reaction L-cysteinyl-[protein] + hexadecanoyl-CoA = S-hexadecanoyl-L-cysteinyl-[protein] + CoA. Palmitoyltransferase that catalyzes the addition of palmitate onto various protein substrates, such as ncdn and nlrp3. The chain is Palmitoyltransferase ZDHHC1 from Danio rerio (Zebrafish).